The primary structure comprises 366 residues: 1-deoxy-D-xylulose 5-phosphate reductoisomerase (366 aa).

Residues threonine 7, glycine 8, serine 9, isoleucine 10, glycine 31, lysine 32, asparagine 33, and asparagine 113 each contribute to the NADPH site. Position 114 (lysine 114) interacts with 1-deoxy-D-xylulose 5-phosphate. Residue glutamate 115 participates in NADPH binding. A Mn(2+)-binding site is contributed by aspartate 133. 1-deoxy-D-xylulose 5-phosphate-binding residues include serine 134, glutamate 135, serine 158, and histidine 181. Glutamate 135 serves as a coordination point for Mn(2+). Residue glycine 187 coordinates NADPH. 1-deoxy-D-xylulose 5-phosphate contacts are provided by serine 194, asparagine 199, lysine 200, and glutamate 203. Glutamate 203 is a Mn(2+) binding site.

Belongs to the DXR family. Requires Mg(2+) as cofactor. Mn(2+) is required as a cofactor.

The catalysed reaction is 2-C-methyl-D-erythritol 4-phosphate + NADP(+) = 1-deoxy-D-xylulose 5-phosphate + NADPH + H(+). The protein operates within isoprenoid biosynthesis; isopentenyl diphosphate biosynthesis via DXP pathway; isopentenyl diphosphate from 1-deoxy-D-xylulose 5-phosphate: step 1/6. Its function is as follows. Catalyzes the NADPH-dependent rearrangement and reduction of 1-deoxy-D-xylulose-5-phosphate (DXP) to 2-C-methyl-D-erythritol 4-phosphate (MEP). This is 1-deoxy-D-xylulose 5-phosphate reductoisomerase from Helicobacter pylori (strain G27).